The following is a 523-amino-acid chain: Spastin (523 aa).

Topologically, residues 1–41 are cytoplasmic; that stretch reads MLDKLSKHKTMFYERVKEIDQILFSQQQAKQTQLDNLSNNN. Residues 42 to 58 constitute an intramembrane region (helical); the sequence is ASGGFFSGFMKMFSPLS. 3 stretches are compositionally biased toward low complexity: residues 57 to 71, 171 to 184, and 193 to 210; these read LSTP…NSNT, QQPP…QQQP, and TALR…TANN. Disordered stretches follow at residues 57–77 and 129–218; these read LSTP…AISQ and GISS…LDQI. Over 59–523 the chain is Cytoplasmic; that stretch reads TPPNSSSNNN…ESYGTFAKGI (465 aa).

It belongs to the AAA ATPase family. Spastin subfamily. As to quaternary structure, homohexamer. The homohexamer is stabilized by ATP-binding. The homohexamer may adopt a ring conformation through which microtubules pass prior to being severed.

It localises to the membrane. The enzyme catalyses n ATP + n H2O + a microtubule = n ADP + n phosphate + (n+1) alpha/beta tubulin heterodimers.. Its function is as follows. ATP-dependent microtubule severing protein. Stimulates microtubule minus-end depolymerization and poleward microtubule flux in the mitotic spindle. This chain is Spastin, found in Naegleria gruberi (Amoeba).